The chain runs to 794 residues: Furin (794 aa).

The first 26 residues, 1–26, serve as a signal peptide directing secretion; that stretch reads MELRPWLLWVVAATGTLVLLAADAQG. Positions 27–107 are cleaved as a propeptide — inhibition peptide; it reads QKVFTNTWAV…QQVAKRRTKR (81 aa). Topologically, residues 108–715 are lumenal; sequence DVYQEPTDPK…AGLLPSHLPE (608 aa). Asp-115 contacts Ca(2+). Residues 121–435 enclose the Peptidase S8 domain; sequence QWYLSGVTQR…YGLLDAGAMV (315 aa). Asp-153 serves as the catalytic Charge relay system. Asp-154 is a substrate binding site. Asp-162, Asp-174, Asp-179, and Asp-181 together coordinate Ca(2+). The segment at 162–183 is disordered; that stretch reads DLAGNYDPGASFDVNDQDPDPQ. 191–192 contributes to the substrate binding site; it reads DN. The Charge relay system role is filled by His-194. Residues Val-205, Asn-208, Val-210, and Gly-212 each coordinate Ca(2+). 2 disulfide bridges follow: Cys-211–Cys-360 and Cys-303–Cys-333. Substrate-binding positions include Glu-236, 253–258, Asp-264, and 292–295; these read SWGPED and ASGN. Asp-258 provides a ligand contact to Ca(2+). Asp-301 provides a ligand contact to Ca(2+). Substrate contacts are provided by Asp-306 and Tyr-308. Glu-331 is a binding site for Ca(2+). Ser-368 (charge relay system) is an active-site residue. Ser-368 serves as a coordination point for substrate. N-linked (GlcNAc...) asparagine glycans are attached at residues Asn-387 and Asn-440. The P/Homo B domain maps to 444–576; sequence VAPQRKCIID…TLVLYGTAPE (133 aa). Cys-450 and Cys-474 are oxidised to a cystine. The short motif at 498-500 is the Cell attachment site element; it reads RGD. An N-linked (GlcNAc...) asparagine glycan is attached at Asn-553. FU repeat units lie at residues 577 to 620 and 638 to 681; these read GLPV…GFAP and ASVC…QSQS. The disordered stretch occupies residues 673–696; sequence QTCSRQSQSSRESPPQQQPPRLPP. The segment covering 676–687 has biased composition (low complexity); it reads SRQSQSSRESPP. A helical transmembrane segment spans residues 716–738; that stretch reads VVAGLSCAFIVLVFVTVFLVLQL. The Cytoplasmic segment spans residues 739 to 794; the sequence is RSGFSFRGVKVYTMDRGLISYKGLPPEAWQEECPSDSEEDEGRGERTAFIKDQSAL. The segment at 759-762 is cell surface signal; it reads YKGL. Positions 767 to 780 are enriched in acidic residues; that stretch reads WQEECPSDSEEDEG. The segment at 767–794 is disordered; it reads WQEECPSDSEEDEGRGERTAFIKDQSAL. Residues Ser-773 and Ser-775 each carry the phosphoserine; by CK2 modification. The Trans Golgi network signal signature appears at 773-779; sequence SDSEEDE.

Belongs to the peptidase S8 family. Furin subfamily. As to quaternary structure, interacts with FLNA. Binds to PACS1 which mediates TGN localization and connection to clathrin adapters. Interacts with LAMP1, LAMP2 and LAMP3. Ca(2+) serves as cofactor. In terms of processing, the inhibition peptide, which plays the role of an intramolecular chaperone, is autocatalytically removed in the endoplasmic reticulum (ER) and remains non-covalently bound to furin as a potent autoinhibitor. Following transport to the trans Golgi, a second cleavage within the inhibition propeptide results in propeptide dissociation and furin activation. Post-translationally, phosphorylation is required for TGN localization of the endoprotease. In vivo, exists as di-, mono- and non-phosphorylated forms. In terms of tissue distribution, seems to be expressed ubiquitously.

It is found in the golgi apparatus. The protein localises to the trans-Golgi network membrane. The protein resides in the cell membrane. Its subcellular location is the secreted. It localises to the endosome membrane. The enzyme catalyses Release of mature proteins from their proproteins by cleavage of -Arg-Xaa-Yaa-Arg-|-Zaa- bonds, where Xaa can be any amino acid and Yaa is Arg or Lys. Releases albumin, complement component C3 and von Willebrand factor from their respective precursors.. With respect to regulation, inhibited by the not secondly cleaved propeptide. Inhibited by m-guanidinomethyl-phenylacetyl-Arg-Val-Arg-(amidomethyl)-benzamidine (m-guanidinomethyl-Phac-RVR-Amb) and 4-guanidinomethyl-phenylacetyl-Arg-Tle-Arg-4-amidinobenzylamide (MI-1148). Inhibited by Decanoyl-Arg-Val-Lys-Arg-chloromethylketone (decanoyl-RVKR-CMK). Inhibited by heparin/heparan sulfate-binding. Functionally, ubiquitous endoprotease within constitutive secretory pathways capable of cleavage at the RX(K/R)R consensus motif. Mediates processing of TGFB1, an essential step in TGF-beta-1 activation. Converts through proteolytic cleavage the non-functional Brain natriuretic factor prohormone into its active hormone BNP(1-32). By mediating processing of accessory subunit ATP6AP1/Ac45 of the V-ATPase, regulates the acidification of dense-core secretory granules in islets of Langerhans cells. (Microbial infection) Cleaves and activates diphtheria toxin DT. In terms of biological role, (Microbial infection) Cleaves and activates anthrax toxin protective antigen (PA). Its function is as follows. (Microbial infection) Cleaves and activates HIV-1 virus Envelope glycoprotein gp160. Functionally, (Microbial infection) Required for H7N1 and H5N1 influenza virus infection probably by cleaving hemagglutinin. (Microbial infection) Able to cleave S.pneumoniae serine-rich repeat protein PsrP. In terms of biological role, (Microbial infection) Facilitates human coronaviruses EMC and SARS-CoV-2 infections by proteolytically cleaving the spike protein at the monobasic S1/S2 cleavage site. This cleavage is essential for spike protein-mediated cell-cell fusion and entry into human lung cells. Its function is as follows. (Microbial infection) Facilitates mumps virus infection by proteolytically cleaving the viral fusion protein F. In Homo sapiens (Human), this protein is Furin.